A 447-amino-acid polypeptide reads, in one-letter code: Ribosomal protein uS12 methylthiotransferase RimO (447 aa).

The MTTase N-terminal domain maps to 10–120 (PKVGFVSLGC…VVNAVHDVVP (111 aa)). Cys19, Cys55, Cys84, Cys153, Cys157, and Cys160 together coordinate [4Fe-4S] cluster. The region spanning 139–377 (LTPRHYAYLK…MAHQQAISAA (239 aa)) is the Radical SAM core domain. Positions 380–447 (QMKIGKEIEV…DEYDLWAEML (68 aa)) constitute a TRAM domain.

This sequence belongs to the methylthiotransferase family. RimO subfamily. It depends on [4Fe-4S] cluster as a cofactor.

The protein resides in the cytoplasm. The catalysed reaction is L-aspartate(89)-[ribosomal protein uS12]-hydrogen + (sulfur carrier)-SH + AH2 + 2 S-adenosyl-L-methionine = 3-methylsulfanyl-L-aspartate(89)-[ribosomal protein uS12]-hydrogen + (sulfur carrier)-H + 5'-deoxyadenosine + L-methionine + A + S-adenosyl-L-homocysteine + 2 H(+). In terms of biological role, catalyzes the methylthiolation of an aspartic acid residue of ribosomal protein uS12. The protein is Ribosomal protein uS12 methylthiotransferase RimO of Pseudomonas syringae pv. syringae (strain B728a).